Here is a 452-residue protein sequence, read N- to C-terminus: Chaperone SurA (452 aa).

The first 28 residues, 1–28 (MKKTLRFAAVVSSLAAASALLAAAPAAA), serve as a signal peptide directing secretion. PpiC domains lie at 186-288 (QQDL…RLVD) and 302-400 (IVQT…QVLS).

The protein localises to the periplasm. The catalysed reaction is [protein]-peptidylproline (omega=180) = [protein]-peptidylproline (omega=0). Chaperone involved in the correct folding and assembly of outer membrane proteins. Recognizes specific patterns of aromatic residues and the orientation of their side chains, which are found more frequently in integral outer membrane proteins. May act in both early periplasmic and late outer membrane-associated steps of protein maturation. This chain is Chaperone SurA, found in Burkholderia lata (strain ATCC 17760 / DSM 23089 / LMG 22485 / NCIMB 9086 / R18194 / 383).